The chain runs to 155 residues: 2-C-methyl-D-erythritol 2,4-cyclodiphosphate synthase (155 aa).

Residues Asp-10, His-12, and His-46 each contribute to the a divalent metal cation site. 10–12 contacts 4-CDP-2-C-methyl-D-erythritol 2-phosphate; that stretch reads DSH. 4-CDP-2-C-methyl-D-erythritol 2-phosphate contacts are provided by residues 60–62, 65–69, and Lys-140; these read DIG and FDEND.

The protein belongs to the IspF family. In terms of assembly, homotrimer. It depends on a divalent metal cation as a cofactor.

The catalysed reaction is 4-CDP-2-C-methyl-D-erythritol 2-phosphate = 2-C-methyl-D-erythritol 2,4-cyclic diphosphate + CMP. Its pathway is isoprenoid biosynthesis; isopentenyl diphosphate biosynthesis via DXP pathway; isopentenyl diphosphate from 1-deoxy-D-xylulose 5-phosphate: step 4/6. Functionally, involved in the biosynthesis of isopentenyl diphosphate (IPP) and dimethylallyl diphosphate (DMAPP), two major building blocks of isoprenoid compounds. Catalyzes the conversion of 4-diphosphocytidyl-2-C-methyl-D-erythritol 2-phosphate (CDP-ME2P) to 2-C-methyl-D-erythritol 2,4-cyclodiphosphate (ME-CPP) with a corresponding release of cytidine 5-monophosphate (CMP). The sequence is that of 2-C-methyl-D-erythritol 2,4-cyclodiphosphate synthase from Mycoplasmoides gallisepticum (strain R(low / passage 15 / clone 2)) (Mycoplasma gallisepticum).